The chain runs to 215 residues: E3 ubiquitin-protein ligase NleG (215 aa).

Positions cysteine 136–valine 189 are RING/U-box domain. Positions threonine 213–isoleucine 215 match the PDZ-binding motif motif.

It belongs to the NleG E3 ligase family. As to quaternary structure, interacts with host GOPC (human protein). In terms of processing, two sizes of protein are detected upon expression in C.rodentium; only the smaller protein is secreted.

The protein localises to the secreted. It localises to the host cytoplasm. The enzyme catalyses S-ubiquitinyl-[E2 ubiquitin-conjugating enzyme]-L-cysteine + [acceptor protein]-L-lysine = [E2 ubiquitin-conjugating enzyme]-L-cysteine + N(6)-ubiquitinyl-[acceptor protein]-L-lysine.. Its function is as follows. Effector proteins function to alter host cell physiology and promote bacterial survival in host tissues. This protein is an E3 ubiquitin-protein ligase that probably interferes with the host's ubiquitination pathway and targets host proteins for proteasomal degradation. Can ubiquitinate ubiquitin, giving rise to polyubiquitin chains (in vitro). Does not complement an nleG8 deletion in C.rodentium. The protein is E3 ubiquitin-protein ligase NleG of Escherichia coli O157:H7.